The primary structure comprises 290 residues: Lipid phosphate phosphatase 2 (290 aa).

3 helical membrane passes run 26–46, 69–89, and 93–113; these read WLIL…EPFH, WAVP…YYFI, and VYDL…TGVI. N-linked (GlcNAc...) asparagine glycosylation is present at Asn-142. A run of 3 helical transmembrane segments spans residues 162 to 182, 193 to 213, and 226 to 246; these read SFPS…SLYL, GHVA…LVGV, and VFGG…QFFP.

Belongs to the PA-phosphatase related phosphoesterase family. Expressed in roots, stems, leaves, buds, flowers and siliques.

It localises to the membrane. Its activity is regulated as follows. PA phosphatase activity not inhibited by N-ethylmaleimide. Its function is as follows. May play a general 'housekeeping role' in lipid metabolism. Exhibits both diacylglycerol pyrophosphate (DGPP) phosphatase and phosphatidate (PA) phosphatase activities with no preference for either substrate. May play a role downstream of the ABA signaling pathway during seed germination and in stomatal movement in leaves. The sequence is that of Lipid phosphate phosphatase 2 (LPP2) from Arabidopsis thaliana (Mouse-ear cress).